Here is a 552-residue protein sequence, read N- to C-terminus: Formate--tetrahydrofolate ligase (552 aa).

62 to 69 (TPAGEGKS) contributes to the ATP binding site.

This sequence belongs to the formate--tetrahydrofolate ligase family.

It carries out the reaction (6S)-5,6,7,8-tetrahydrofolate + formate + ATP = (6R)-10-formyltetrahydrofolate + ADP + phosphate. The protein operates within one-carbon metabolism; tetrahydrofolate interconversion. The protein is Formate--tetrahydrofolate ligase of Ligilactobacillus salivarius (strain UCC118) (Lactobacillus salivarius).